We begin with the raw amino-acid sequence, 849 residues long: Thrombospondin type-1 domain-containing protein 1 (849 aa).

The N-terminal stretch at 1 to 24 (MKQTLKDFSNLLLVVLCDYVLGEA) is a signal peptide. The Extracellular segment spans residues 25-413 (EHLVLGEPGH…QPQAPVKSNN (389 aa)). N-linked (GlcNAc...) asparagine glycosylation is found at asparagine 39, asparagine 50, asparagine 55, asparagine 66, asparagine 77, asparagine 106, and asparagine 303. The 54-residue stretch at 340–393 (IETWGLWQPWSQCSASCGDGVRERRRVCLTSSPSRPGCPGMSSETSPCSLEDCA) folds into the TSP type-1 domain. Disulfide bonds link cysteine 352–cysteine 387, cysteine 356–cysteine 392, and cysteine 367–cysteine 377. The chain crosses the membrane as a helical span at residues 414 to 434 (VVTVTGISLCLFIIVATVLIT). Over 435–849 (LWRKLGRAPK…STLSVEKLVI (415 aa)) the chain is Cytoplasmic. A Phosphoserine modification is found at serine 463. Disordered regions lie at residues 472–516 (SEPR…SESF), 595–799 (KSPF…KCQS), and 828–849 (GYFGSNEEDETTSTLSVEKLVI). Over residues 479–493 (SDAGDGPAGSPGDPG) the composition is skewed to low complexity. A compositionally biased stretch (basic residues) spans 636 to 651 (SQVRSHSRGSHFRRTA). Residues 652-666 (SFHEARQARPFRERS) show a composition bias toward basic and acidic residues. Pro residues predominate over residues 720-732 (SPLPKPHSLGPPP).

As to quaternary structure, part of a complex composed of THSD1, PTK2/FAK1, TLN1 and VCL. Interacts with TLN1.

Its subcellular location is the endosome membrane. It localises to the cell junction. It is found in the focal adhesion. Its function is as follows. Is a positive regulator of nascent focal adhesion assembly, involved in the modulation of endothelial cell attachment to the extracellular matrix. The chain is Thrombospondin type-1 domain-containing protein 1 (THSD1) from Bos taurus (Bovine).